The following is a 98-amino-acid chain: NADH-ubiquinone oxidoreductase chain 4L (98 aa).

A run of 3 helical transmembrane segments spans residues 1–21 (MTPVHFSFSSAFILGLMGLAF), 29–49 (ALLCLEGMMLSLFIALALWAL), and 59–79 (APMLLLAFSACEASTGLALLV).

The protein belongs to the complex I subunit 4L family.

It localises to the mitochondrion membrane. It carries out the reaction a ubiquinone + NADH + 5 H(+)(in) = a ubiquinol + NAD(+) + 4 H(+)(out). Its function is as follows. Core subunit of the mitochondrial membrane respiratory chain NADH dehydrogenase (Complex I) which catalyzes electron transfer from NADH through the respiratory chain, using ubiquinone as an electron acceptor. Part of the enzyme membrane arm which is embedded in the lipid bilayer and involved in proton translocation. The protein is NADH-ubiquinone oxidoreductase chain 4L (MT-ND4L) of Carassius auratus (Goldfish).